Reading from the N-terminus, the 323-residue chain is MKYTEFEIISKYFKRNQKKDVNEIKGIGDDSALIKIPKNNILAISTDTLVEGTHFLKNISPEDLGYKTVAVNLSDLAAMGAEPKWTTLSITMPESNNIWLKKFSSSFFKILNKYNVRLIGGDTNRGSLSITLSMYGLLKKQIALLRSNANIGDLIYVTGTLGESAAGLFLLKKNIFIKNVNIRNYLIKKHLNPIPRVSEGMALRKIANAAIDLSDGLIADLDHILNDSQCGANINLNKIPISKVLIDNFQSQNYLNWALNVGEDYELCFTISKKNIDKLKIIKKKFLVNFTCIGYITPIEQGFNLFDNQKKIIFKKKGFNHFD.

Mg(2+) is bound by residues aspartate 30, serine 45, threonine 46, and aspartate 47. A substrate-binding site is contributed by histidine 54. Aspartate 75 and aspartate 122 together coordinate Mg(2+). ATP-binding positions include 121–122 (GD) and arginine 146. Residue aspartate 212 participates in Mg(2+) binding. An ATP-binding site is contributed by serine 214. Aspartate 215 serves as a coordination point for Mg(2+). Glutamate 263 and phenylalanine 319 together coordinate substrate.

It belongs to the thiamine-monophosphate kinase family.

It catalyses the reaction thiamine phosphate + ATP = thiamine diphosphate + ADP. It functions in the pathway cofactor biosynthesis; thiamine diphosphate biosynthesis; thiamine diphosphate from thiamine phosphate: step 1/1. Its function is as follows. Catalyzes the ATP-dependent phosphorylation of thiamine-monophosphate (TMP) to form thiamine-pyrophosphate (TPP), the active form of vitamin B1. The chain is Thiamine-monophosphate kinase from Buchnera aphidicola subsp. Acyrthosiphon pisum (strain APS) (Acyrthosiphon pisum symbiotic bacterium).